The following is a 207-amino-acid chain: ATP-dependent Clp protease proteolytic subunit (207 aa).

The active-site Nucleophile is S111. H136 is an active-site residue.

It belongs to the peptidase S14 family. In terms of assembly, fourteen ClpP subunits assemble into 2 heptameric rings which stack back to back to give a disk-like structure with a central cavity, resembling the structure of eukaryotic proteasomes.

It is found in the cytoplasm. It catalyses the reaction Hydrolysis of proteins to small peptides in the presence of ATP and magnesium. alpha-casein is the usual test substrate. In the absence of ATP, only oligopeptides shorter than five residues are hydrolyzed (such as succinyl-Leu-Tyr-|-NHMec, and Leu-Tyr-Leu-|-Tyr-Trp, in which cleavage of the -Tyr-|-Leu- and -Tyr-|-Trp bonds also occurs).. Cleaves peptides in various proteins in a process that requires ATP hydrolysis. Has a chymotrypsin-like activity. Plays a major role in the degradation of misfolded proteins. The protein is ATP-dependent Clp protease proteolytic subunit of Aliivibrio fischeri (strain ATCC 700601 / ES114) (Vibrio fischeri).